The sequence spans 206 residues: Sclerostin domain-containing protein 1 (206 aa).

The first 23 residues, 1 to 23 (MLPPAIHLSLIPLLCILMKNCLA), serve as a signal peptide directing secretion. Residues 42-62 (AHPSSNSTLNQARNGGRHFSS) form a disordered region. The span at 43 to 62 (HPSSNSTLNQARNGGRHFSS) shows a compositional bias: polar residues. Asparagine 47 carries an N-linked (GlcNAc...) asparagine glycan. 4 disulfide bridges follow: cysteine 75–cysteine 133, cysteine 89–cysteine 147, cysteine 100–cysteine 163, and cysteine 104–cysteine 165. Residues 75-170 (CRELRSTKYI…TACKCKRYTR (96 aa)) enclose the CTCK domain. A glycan (N-linked (GlcNAc...) asparagine) is linked at asparagine 173. Residues 176 to 206 (SHNFESVSPAKPAQHHRERKRASKSSKHSLS) are disordered. Residues 188 to 206 (AQHHRERKRASKSSKHSLS) are compositionally biased toward basic residues.

Belongs to the sclerostin family. In terms of assembly, interacts with BMP2, BMP4, BMP6 and BMP7 with high affinity. In terms of tissue distribution, highly expressed within the maximally sensitized/receptive endometrium. Weakly expressed in brain, kidney and the female reproductive tract. Expressed in the dermal papilla (DP) and at high level in the precortex of both anagen vibrissae and pelage follicles. Dynymic expression during the hair cycle.

The protein localises to the secreted. Functionally, directly antagonizes activity of BMP2, BMP4, BMP6 and BMP7 in a dose-dependent manner. May be involved in the onset of endometrial receptivity for implantation/sensitization for the decidual cell reaction. Enhances Wnt signaling and inhibits TGF-beta signaling. This is Sclerostin domain-containing protein 1 (Sostdc1) from Rattus norvegicus (Rat).